The sequence spans 160 residues: Glucagon-1 (160 aa).

The N-terminal stretch at 1-22 (MSDPGFLAAPVLLLLLVSLASA) is a signal peptide. Propeptides lie at residues 23-40 (SLEQ…RPLS), 74-79 (GGSELQ), and 116-127 (DGGDHLAENSED). The tract at residues 112-132 (KSRRDGGDHLAENSEDKRHAE) is disordered.

It belongs to the glucagon family.

The protein localises to the secreted. Its function is as follows. Promotes hydrolysis of glycogen and lipids, and raises the blood sugar level. In Petromyzon marinus (Sea lamprey), this protein is Glucagon-1 (gcg1).